A 551-amino-acid chain; its full sequence is Membrane protein insertase YidC (551 aa).

Residues 3–23 (ANHIRILLLVTIAIMFISLMG) form a helical membrane-spanning segment. Over residues 33–47 (NTKQQTSATQNNSHY) the composition is skewed to polar residues. Positions 33-58 (NTKQQTSATQNNSHYDNADSSTNTDV) are disordered. 3 consecutive transmembrane segments (helical) span residues 361–381 (LVGN…LIFY), 431–451 (LSGC…YWVL), and 504–524 (VMMF…SGLV).

Belongs to the OXA1/ALB3/YidC family. Type 1 subfamily. As to quaternary structure, interacts with the Sec translocase complex via SecD. Specifically interacts with transmembrane segments of nascent integral membrane proteins during membrane integration.

The protein localises to the cell inner membrane. Functionally, required for the insertion and/or proper folding and/or complex formation of integral membrane proteins into the membrane. Involved in integration of membrane proteins that insert both dependently and independently of the Sec translocase complex, as well as at least some lipoproteins. Aids folding of multispanning membrane proteins. This is Membrane protein insertase YidC from Francisella tularensis subsp. novicida (strain U112).